The chain runs to 728 residues: Catalase-peroxidase 1 (728 aa).

Positions 1–22 (MDKTQSSQGKCPVMHGANSAVA) are cleaved as a signal peptide. The tryptophyl-tyrosyl-methioninium (Trp-Tyr) (with M-251) cross-link spans 97 to 225 (WHSAGTYRVA…LAAVMMGLIY (129 aa)). Residue H98 is the Proton acceptor of the active site. The tryptophyl-tyrosyl-methioninium (Tyr-Met) (with W-97) cross-link spans 225–251 (YVNPEGVDGKPDPLRTAQDVRVTFARM). Residue H266 coordinates heme b.

Belongs to the peroxidase family. Peroxidase/catalase subfamily. In terms of assembly, homodimer or homotetramer. Requires heme b as cofactor. In terms of processing, formation of the three residue Trp-Tyr-Met cross-link is important for the catalase, but not the peroxidase activity of the enzyme.

It catalyses the reaction H2O2 + AH2 = A + 2 H2O. It carries out the reaction 2 H2O2 = O2 + 2 H2O. Its function is as follows. Bifunctional enzyme with both catalase and broad-spectrum peroxidase activity. The chain is Catalase-peroxidase 1 from Shewanella sp. (strain MR-4).